The primary structure comprises 118 residues: Thioredoxin AMT13 (118 aa).

The Thioredoxin domain maps to 1–110 (MSDNKAIQTL…LEDAIRANLG (110 aa)). An intrachain disulfide couples Cys36 to Cys39.

It belongs to the thioredoxin family.

The protein operates within mycotoxin biosynthesis. Thioredoxin; part of the gene clusters that mediate the biosynthesis of AM-toxins, host-selective toxins (HSTs) causing Alternaria blotch on apple, a worldwide distributed disease. AM-toxins are cyclic depsipeptides containing the 3 residues 2-hydroxy-isovaleric acid (2-HIV), dehydroalanine, L-alanine which are common for all 3 AM-toxins I to III. The fourth precursor is L-alpha-amino-methoxyphenyl-valeric acid (L-Amv) for AM-toxin I, L-alpha-amino-phenyl-valeric acid (L-Apv) for AM-toxin II, and L-alpha-amino-hydroxyphenyl-valeric acid (L-Ahv) for AM-toxin III. AM-toxins have two target sites for affecting susceptible apple cells; they cause invagination of the plasma membrane and electrolyte loss and chloroplast disorganization. The non-ribosomal peptide synthetase AMT1 contains 4 catalytic modules and is responsible for activation of each residue in AM-toxin. The aldo-keto reductase AMT2 catalyzes the conversion of 2-keto-isovaleric acid (2-KIV) to 2-hydroxy-isovaleric acid (2-HIV), one of the precursor residues incorporated by AMT1 during AM-toxin biosynthesis, by reduction of its ketone to an alcohol. The cytochrome P450 monooxygenase AMT3 and the thioesterase AMT4 are also important for AM-toxin production, but their exact function within the AM-toxin biosynthesis are not known yet. Up to 21 proteins (including AMT1 to AMT4) are predicted to be involved in AM-toxin biosynthesis since their expression ishighly up-regulated in AM-toxin-producing cultures. The protein is Thioredoxin AMT13 of Alternaria alternata (Alternaria rot fungus).